We begin with the raw amino-acid sequence, 491 residues long: Glutamyl-tRNA(Gln) amidotransferase subunit A (491 aa).

Residues Lys-78 and Ser-158 each act as charge relay system in the active site. The active-site Acyl-ester intermediate is the Ser-182.

It belongs to the amidase family. GatA subfamily. As to quaternary structure, heterotrimer of A, B and C subunits.

It catalyses the reaction L-glutamyl-tRNA(Gln) + L-glutamine + ATP + H2O = L-glutaminyl-tRNA(Gln) + L-glutamate + ADP + phosphate + H(+). Functionally, allows the formation of correctly charged Gln-tRNA(Gln) through the transamidation of misacylated Glu-tRNA(Gln) in organisms which lack glutaminyl-tRNA synthetase. The reaction takes place in the presence of glutamine and ATP through an activated gamma-phospho-Glu-tRNA(Gln). This is Glutamyl-tRNA(Gln) amidotransferase subunit A from Afipia carboxidovorans (strain ATCC 49405 / DSM 1227 / KCTC 32145 / OM5) (Oligotropha carboxidovorans).